A 396-amino-acid chain; its full sequence is Elongation factor Tu (396 aa).

In terms of domain architecture, tr-type G spans 11–205 (KPHVNIGTIG…TVDEYIPTPE (195 aa)). Positions 20–27 (GHVDHGKT) are G1. 20–27 (GHVDHGKT) lines the GTP pocket. T27 lines the Mg(2+) pocket. Positions 61–65 (GITIN) are G2. The tract at residues 82 to 85 (DAPG) is G3. GTP-binding positions include 82-86 (DAPGH) and 137-140 (NKCD). Residues 137–140 (NKCD) are G4. The segment at 175 to 177 (SAL) is G5.

Belongs to the TRAFAC class translation factor GTPase superfamily. Classic translation factor GTPase family. EF-Tu/EF-1A subfamily. Monomer.

It is found in the cytoplasm. The catalysed reaction is GTP + H2O = GDP + phosphate + H(+). Functionally, GTP hydrolase that promotes the GTP-dependent binding of aminoacyl-tRNA to the A-site of ribosomes during protein biosynthesis. This chain is Elongation factor Tu, found in Lactobacillus helveticus (strain DPC 4571).